We begin with the raw amino-acid sequence, 625 residues long: 1-deoxy-D-xylulose-5-phosphate synthase (625 aa).

Residues His84 and 125–127 (GHS) each bind thiamine diphosphate. Asp156 provides a ligand contact to Mg(2+). Thiamine diphosphate contacts are provided by residues 157–158 (GA), Asn185, Phe292, and Glu373. A Mg(2+)-binding site is contributed by Asn185.

This sequence belongs to the transketolase family. DXPS subfamily. Homodimer. Mg(2+) serves as cofactor. Requires thiamine diphosphate as cofactor.

It catalyses the reaction D-glyceraldehyde 3-phosphate + pyruvate + H(+) = 1-deoxy-D-xylulose 5-phosphate + CO2. It functions in the pathway metabolic intermediate biosynthesis; 1-deoxy-D-xylulose 5-phosphate biosynthesis; 1-deoxy-D-xylulose 5-phosphate from D-glyceraldehyde 3-phosphate and pyruvate: step 1/1. Functionally, catalyzes the acyloin condensation reaction between C atoms 2 and 3 of pyruvate and glyceraldehyde 3-phosphate to yield 1-deoxy-D-xylulose-5-phosphate (DXP). This chain is 1-deoxy-D-xylulose-5-phosphate synthase, found in Marinomonas sp. (strain MWYL1).